The chain runs to 325 residues: Lactonase drp35 (325 aa).

Residues Glu46, Thr108, Gly110, Asp128, Thr131, Tyr133, Asp136, Asn183, Asp234, and Ser235 each contribute to the Ca(2+) site. The active-site Proton donor is the Asp234.

This sequence belongs to the SMP-30/CGR1 family. Requires Ca(2+) as cofactor.

The protein localises to the cytoplasm. Its function is as follows. Exhibits lactonase activity. Acts in cells with perturbed membrane integrity and is possibly related to the membrane homeostasis. The sequence is that of Lactonase drp35 (drp35) from Staphylococcus epidermidis (strain ATCC 35984 / DSM 28319 / BCRC 17069 / CCUG 31568 / BM 3577 / RP62A).